The following is a 226-amino-acid chain: Lysoplasmalogenase TMEM86B (226 aa).

At 1 to 23 (MDPGKEGLPRKPRFSAQQLHVGK) the chain is on the cytoplasmic side. A helical membrane pass occupies residues 24–40 (WLSPFFFTCAVYFLLWI). Residues 41–46 (PDDQPS) lie on the Extracellular side of the membrane. A helical membrane pass occupies residues 47-64 (WVGALVKCLPVLSLVVFL). Over 65–76 (RAVDAGGGYSAR) the chain is Cytoplasmic. Residues 77 to 93 (LQGALLCSAVGDACLVW) traverse the membrane as a helical segment. At 94–99 (PEAFLH) the chain is on the extracellular side. Residues 100–117 (GVAAFAAAHLLYLWAFGL) traverse the membrane as a helical segment. The Cytoplasmic segment spans residues 118–123 (TPLQPG). Residues 124–140 (LLLLVILAALPYYGLLL) form a helical membrane-spanning segment. The Extracellular portion of the chain corresponds to 141-146 (WHLPPD). Residues 147–163 (LVLALTAYSLALATMLW) traverse the membrane as a helical segment. Over 164 to 171 (RGLARGGS) the chain is Cytoplasmic. The helical transmembrane segment at 172 to 188 (TGWGALLFTLSDTTLAW) threads the bilayer. Residues 189-199 (NAFAQPLPHAR) lie on the Extracellular side of the membrane. The helical transmembrane segment at 200–217 (LVVMTTYYSAQVLISLSV) threads the bilayer. Residues 218–226 (SQSPKLKPN) lie on the Cytoplasmic side of the membrane.

Belongs to the TMEM86 family. Homodimer.

It is found in the endoplasmic reticulum membrane. The protein resides in the cytoplasm. The enzyme catalyses a 1-O-(1Z-alkenyl)-sn-glycero-3-phosphocholine + H2O = a 2,3-saturated aldehyde + sn-glycerol 3-phosphocholine. The catalysed reaction is a 1-O-(1Z-alkenyl)-sn-glycero-3-phosphoethanolamine + H2O = a 2,3-saturated aldehyde + sn-glycero-3-phosphoethanolamine. With respect to regulation, competitively inhibited by lysophosphatidic acid. In terms of biological role, catalyzes the hydrolysis of the vinyl ether bond of choline or ethanolamine lysoplasmalogens, forming fatty aldehyde and glycerophosphocholine or glycerophosphoethanolamine, respectively and is specific for the sn-2-deacylated (lyso) form of plasmalogen. This Sus scrofa (Pig) protein is Lysoplasmalogenase TMEM86B (TMEM86B).